The chain runs to 256 residues: tRNA-cytidine(32) 2-sulfurtransferase (256 aa).

The short motif at 35–40 is the PP-loop motif element; sequence SGGKDS. [4Fe-4S] cluster is bound by residues C110, C113, and C201.

This sequence belongs to the TtcA family. Homodimer. Mg(2+) serves as cofactor. Requires [4Fe-4S] cluster as cofactor.

Its subcellular location is the cytoplasm. The catalysed reaction is cytidine(32) in tRNA + S-sulfanyl-L-cysteinyl-[cysteine desulfurase] + AH2 + ATP = 2-thiocytidine(32) in tRNA + L-cysteinyl-[cysteine desulfurase] + A + AMP + diphosphate + H(+). It functions in the pathway tRNA modification. Catalyzes the ATP-dependent 2-thiolation of cytidine in position 32 of tRNA, to form 2-thiocytidine (s(2)C32). The sulfur atoms are provided by the cysteine/cysteine desulfurase (IscS) system. The sequence is that of tRNA-cytidine(32) 2-sulfurtransferase from Coxiella burnetii (strain CbuG_Q212) (Coxiella burnetii (strain Q212)).